The following is a 201-amino-acid chain: Urease accessory protein UreG (201 aa).

Residue 11-18 (GPVGSGKT) participates in GTP binding.

Belongs to the SIMIBI class G3E GTPase family. UreG subfamily. In terms of assembly, homodimer. UreD, UreF and UreG form a complex that acts as a GTP-hydrolysis-dependent molecular chaperone, activating the urease apoprotein by helping to assemble the nickel containing metallocenter of UreC. The UreE protein probably delivers the nickel.

The protein resides in the cytoplasm. In terms of biological role, facilitates the functional incorporation of the urease nickel metallocenter. This process requires GTP hydrolysis, probably effectuated by UreG. The protein is Urease accessory protein UreG of Prochlorococcus marinus subsp. pastoris (strain CCMP1986 / NIES-2087 / MED4).